The following is a 227-amino-acid chain: UPF0758 protein llmg_1515 (227 aa).

One can recognise an MPN domain in the interval 103–225 (QVLSSKEYGM…YYSFRERDSN (123 aa)). H174, H176, and D187 together coordinate Zn(2+). The JAMM motif signature appears at 174 to 187 (HNHPSGNLQPSQAD).

This sequence belongs to the UPF0758 family.

The protein is UPF0758 protein llmg_1515 of Lactococcus lactis subsp. cremoris (strain MG1363).